Here is a 457-residue protein sequence, read N- to C-terminus: Methylenetetrahydrofolate--tRNA-(uracil-5-)-methyltransferase TrmFO (457 aa).

7–12 (GAGLAG) lines the FAD pocket. The segment at 38–58 (FTSRQDEKTGTHDVRNATQTR) is disordered. The span at 40 to 52 (SRQDEKTGTHDVR) shows a compositional bias: basic and acidic residues.

The protein belongs to the MnmG family. TrmFO subfamily. Requires FAD as cofactor.

Its subcellular location is the cytoplasm. The enzyme catalyses uridine(54) in tRNA + (6R)-5,10-methylene-5,6,7,8-tetrahydrofolate + NADH + H(+) = 5-methyluridine(54) in tRNA + (6S)-5,6,7,8-tetrahydrofolate + NAD(+). The catalysed reaction is uridine(54) in tRNA + (6R)-5,10-methylene-5,6,7,8-tetrahydrofolate + NADPH + H(+) = 5-methyluridine(54) in tRNA + (6S)-5,6,7,8-tetrahydrofolate + NADP(+). Its function is as follows. Catalyzes the folate-dependent formation of 5-methyl-uridine at position 54 (M-5-U54) in all tRNAs. The protein is Methylenetetrahydrofolate--tRNA-(uracil-5-)-methyltransferase TrmFO of Hydrogenobaculum sp. (strain Y04AAS1).